A 244-amino-acid chain; its full sequence is Probable transcriptional regulatory protein XfasM23_0940 (244 aa).

Belongs to the TACO1 family.

It localises to the cytoplasm. The sequence is that of Probable transcriptional regulatory protein XfasM23_0940 from Xylella fastidiosa (strain M23).